Consider the following 138-residue polypeptide: Augmin complex subunit msd1 (138 aa).

In terms of assembly, component of the augmin complex composed of dgt2, dgt3, dgt4, dgt5, dgt6, msd1, msd5 and wac. The complex interacts directly or indirectly with microtubules and is required for centrosome-independent generation of spindle microtubules.

The protein localises to the cytoplasm. It is found in the cytoskeleton. Its subcellular location is the spindle. As part of the augmin complex, plays a role in centrosome-independent generation of spindle microtubules. The complex is required for mitotic spindle assembly through its involvement in localizing gamma-tubulin to spindle microtubules. msd1 is required for microtubule nucleation from within the mitotic spindle and for localization of Grip71 to centrosomes and mitotic spindle. In Drosophila melanogaster (Fruit fly), this protein is Augmin complex subunit msd1.